Reading from the N-terminus, the 1958-residue chain is Probable Rho GTPase-activating protein CG5521 (1958 aa).

Disordered stretches follow at residues 1-21, 400-424, and 635-804; these read MFTK…QDSK, PPFL…RSQR, and GSVW…GIEG. Pro residues predominate over residues 400–414; it reads PPFLLEPNDDPPPPS. Residues 640–656 show a composition bias toward low complexity; it reads GSGSNSAANGGSAASAA. Residues serine 718, serine 764, and serine 767 each carry the phosphoserine modification. The span at 758 to 774 shows a compositional bias: basic and acidic residues; the sequence is DLRRAMSLDSLARKGDA. A compositionally biased stretch (acidic residues) spans 775–785; it reads EETDSYQEGDN. A phosphoserine mark is found at serine 787, serine 791, serine 793, and serine 795. A compositionally biased stretch (polar residues) spans 788-800; sequence GAGSRSPSPTASS. A Phosphotyrosine modification is found at tyrosine 980. The interval 1534-1568 is disordered; sequence HSTQAPSPALRHASSNSSLQQPDQRSLHSTTASFD. Positions 1546 to 1568 are enriched in polar residues; the sequence is ASSNSSLQQPDQRSLHSTTASFD. Residue serine 1551 is modified to Phosphoserine. Positions 1612–1819 constitute a Rap-GAP domain; the sequence is LRNVDLQKCR…EERNRSLDSV (208 aa). The disordered stretch occupies residues 1903-1958; that stretch reads ATGMSSASPRGPRKLGAPFKSVTKKHSLQHIAVGGGAGAGGDTPPESPTLPQRRFK. Threonine 1945 is subject to Phosphothreonine. A Phosphoserine modification is found at serine 1949.

This is Probable Rho GTPase-activating protein CG5521 from Drosophila melanogaster (Fruit fly).